A 357-amino-acid polypeptide reads, in one-letter code: COP9 signalosome complex subunit 5a (357 aa).

Position 1 is an N-acetylmethionine (M1). The MPN domain maps to 59–196 (VHISALALLK…IGAFRTYPEG (138 aa)). Residues H142, H144, and D155 each coordinate Zn(2+). The JAMM motif signature appears at 142–155 (HSHPGYGCWLSGID). Residues 338–357 (ARQSKKSADDSSDPEPMITS) are disordered.

This sequence belongs to the peptidase M67A family. CSN5 subfamily. Component of the CSN complex, probably composed of CSN1, CSN2, CSN3, CSN4, CSN5 (CSN5A or CSN5B), CSN6 (CSN6A or CSN6B), CSN7 and CSN8. CSN5A or CSN5B are present within distinct CSN complexes each containing only one copy of CSN5. Interacts with itself. In the complex, it is located in the center and probably interacts directly with CSN4 and CSN6A or CSN6B. Present also in subcomplex forms which inculdes CSN3. Also exists as monomeric form. Interacts with CYT1 in vitro, but not in planta. It depends on a divalent metal cation as a cofactor. As to expression, ubiquitously expressed. Highly expressed in flowers and roots. Expressed at lower level in seedlings and siliques.

It localises to the cytoplasm. The protein resides in the nucleus. In terms of biological role, probable protease subunit of the COP9 signalosome complex (CSN), a complex involved in various cellular and developmental processes such as photomorphogenesis and auxin and jasmonate responses. The CSN complex is an essential regulator of the ubiquitin (Ubl) conjugation pathway by mediating the deneddylation of the cullin subunits of the SCF-type E3 ligase complexes, leading to decrease the Ubl ligase activity of SCF. In the complex, it probably acts as the catalytic center that mediates the cleavage of Nedd8 from cullins. It however has no metalloprotease activity by itself and requires the other subunits of the CSN complex. The CSN complex is involved in repression of photomorphogenesis in darkness by regulating the activity of COP1-containing Ubl ligase complexes. The complex is also required for degradation of PSIAA6 by regulating the activity of the Ubl ligase SCF-TIR complex. Involved in CSN's deneddylation/derubylation activity. Required for the deneddylation of all cullins. Essential for the structural integrity of the CSN holocomplex. This Arabidopsis thaliana (Mouse-ear cress) protein is COP9 signalosome complex subunit 5a.